A 66-amino-acid chain; its full sequence is Protein translocase subunit SecE (66 aa).

The helical transmembrane segment at 29 to 49 (LVASTLVVVVAVFIFSLICLV) threads the bilayer.

It belongs to the SecE/SEC61-gamma family. As to quaternary structure, component of the Sec protein translocase complex. Heterotrimer consisting of SecY, SecE and SecG subunits. The heterotrimers can form oligomers, although 1 heterotrimer is thought to be able to translocate proteins. Interacts with the ribosome. Interacts with SecDF, and other proteins may be involved. Interacts with SecA.

Its subcellular location is the cell inner membrane. Its function is as follows. Essential subunit of the Sec protein translocation channel SecYEG. Clamps together the 2 halves of SecY. May contact the channel plug during translocation. The protein is Protein translocase subunit SecE of Rickettsia felis (strain ATCC VR-1525 / URRWXCal2) (Rickettsia azadi).